We begin with the raw amino-acid sequence, 629 residues long: tRNA uridine 5-carboxymethylaminomethyl modification enzyme MnmG (629 aa).

13–18 (GGGHAG) contributes to the FAD binding site. NAD(+) is bound at residue 273-287 (GPRYCPSIEDKVMRF).

Belongs to the MnmG family. In terms of assembly, homodimer. Heterotetramer of two MnmE and two MnmG subunits. The cofactor is FAD.

The protein resides in the cytoplasm. In terms of biological role, NAD-binding protein involved in the addition of a carboxymethylaminomethyl (cmnm) group at the wobble position (U34) of certain tRNAs, forming tRNA-cmnm(5)s(2)U34. This is tRNA uridine 5-carboxymethylaminomethyl modification enzyme MnmG from Photorhabdus laumondii subsp. laumondii (strain DSM 15139 / CIP 105565 / TT01) (Photorhabdus luminescens subsp. laumondii).